A 479-amino-acid polypeptide reads, in one-letter code: Phosphatidylinositol 4-kinase type 2-alpha (479 aa).

Position 1 is an N-acetylmethionine (Met-1). The segment at 1 to 58 (MDETSPLVSPERAQPPEYTFPSGSGAHFPQVPGGAVRVAAAAGSGPSPPCSPGHDRER) is disordered. Residues Ser-5, Ser-9, Ser-44, Ser-47, and Ser-51 each carry the phosphoserine modification. Residues 31–45 (VPGGAVRVAAAAGSG) show a composition bias toward low complexity. Residues 124 to 453 (SIYPERIYQG…VQMPPVIVET (330 aa)) enclose the PI3K/PI4K catalytic domain. Positions 130–136 (IYQGSSG) are G-loop. Residues 131–137 (YQGSSGS) and Lys-152 contribute to the ATP site. Residues 157–159 (EPY) form an important for substrate binding region. The tract at residues 165 to 178 (KWTKWLQKLCCPCC) is important for interaction with membranes. Residues Cys-174, Cys-175, Cys-177, and Cys-178 are each lipidated (S-palmitoyl cysteine). 261–264 (QLFV) contributes to the ATP binding site. The interval 268–276 (KDADYWLRR) is important for interaction with membranes. Residues 305–313 (RNTDRGNDN) form a catalytic loop region. Residues 344–364 (AIDNGLAFPLKHPDSWRAYPF) form an activation loop region. Asp-346 serves as a coordination point for ATP. The interval 359-368 (WRAYPFYWAW) is important for interaction with membranes. Residue Ser-462 is modified to Phosphoserine.

It belongs to the PI3/PI4-kinase family. Type II PI4K subfamily. As to quaternary structure, associates with the BLOC-1 and the AP-3 complexes; the BLOC-1 complex is required for optimal binding of PI4K2A to the AP-3 complex. Interacts with BLOC1S5 and DTNBP1. Interacts with ITCH. Interacts with FOS; this interaction may enhance phosphatidylinositol phosphorylation activity. Interacts with ATG9A. Palmitoylated by ZDHHC3 and ZDHHC7 in the CCPCC motif. Palmitoylation is cholesterol-dependent, and required for TGN localization. Post-translationally, ubiquitinated by ITCH; this does not lead to proteasomal degradation. Detected in brain (at protein level).

The protein localises to the golgi apparatus. It localises to the trans-Golgi network membrane. Its subcellular location is the membrane raft. The protein resides in the endosome. It is found in the endosome membrane. The protein localises to the cytoplasmic vesicle. It localises to the cell projection. Its subcellular location is the dendrite. The protein resides in the presynaptic cell membrane. It is found in the synapse. The protein localises to the synaptosome. It localises to the mitochondrion. Its subcellular location is the membrane. The protein resides in the cell membrane. It is found in the perikaryon. The protein localises to the neuron projection. The enzyme catalyses a 1,2-diacyl-sn-glycero-3-phospho-(1D-myo-inositol) + ATP = a 1,2-diacyl-sn-glycero-3-phospho-(1D-myo-inositol 4-phosphate) + ADP + H(+). In terms of biological role, membrane-bound phosphatidylinositol-4 kinase (PI4-kinase) that catalyzes the phosphorylation of phosphatidylinositol (PI) to phosphatidylinositol 4-phosphate (PI4P), a lipid that plays important roles in endocytosis, Golgi function, protein sorting and membrane trafficking and is required for prolonged survival of neurons. Besides, phosphorylation of phosphatidylinositol (PI) to phosphatidylinositol 4-phosphate (PI4P) is the first committed step in the generation of phosphatidylinositol 4,5-bisphosphate (PIP2), a precursor of the second messenger inositol 1,4,5-trisphosphate (InsP3). The chain is Phosphatidylinositol 4-kinase type 2-alpha (Pi4k2a) from Mus musculus (Mouse).